Here is a 536-residue protein sequence, read N- to C-terminus: C-22 sterol desaturase ERG5A (536 aa).

The chain crosses the membrane as a helical span at residues 41-61 (VWTWVFTLVALCIAYDQIAYI). Position 481 (Cys-481) interacts with heme.

This sequence belongs to the cytochrome P450 family. Heme is required as a cofactor.

The protein localises to the endoplasmic reticulum membrane. The enzyme catalyses 5-dehydroepisterol + NADPH + O2 + H(+) = ergosta-5,7,22,24(28)-tetraen-3beta-ol + NADP(+) + 2 H2O. It functions in the pathway steroid metabolism; ergosterol biosynthesis. C-22 sterol desaturase; part of the third module of ergosterol biosynthesis pathway that includes the late steps of the pathway. ERG5A and ERG5B convert 5-dehydroepisterol into ergosta-5,7,22,24(28)-tetraen-3beta-ol by forming the C-22(23) double bond in the sterol side chain. The third module or late pathway involves the ergosterol synthesis itself through consecutive reactions that mainly occur in the endoplasmic reticulum (ER) membrane. Firstly, the squalene synthase ERG9 catalyzes the condensation of 2 farnesyl pyrophosphate moieties to form squalene, which is the precursor of all steroids. Squalene synthase is crucial for balancing the incorporation of farnesyl diphosphate (FPP) into sterol and nonsterol isoprene synthesis. Secondly, squalene is converted into lanosterol by the consecutive action of the squalene epoxidase ERG1 and the lanosterol synthase ERG7. Then, the delta(24)-sterol C-methyltransferase ERG6 methylates lanosterol at C-24 to produce eburicol. Eburicol is the substrate of the sterol 14-alpha demethylase encoded by CYP51A, CYP51B and CYP51C, to yield 4,4,24-trimethyl ergosta-8,14,24(28)-trienol. CYP51B encodes the enzyme primarily responsible for sterol 14-alpha-demethylation, and plays an essential role in ascospore formation. CYP51A encodes an additional sterol 14-alpha-demethylase, induced on ergosterol depletion and responsible for the intrinsic variation in azole sensitivity. The third CYP51 isoform, CYP51C, does not encode a sterol 14-alpha-demethylase, but is required for full virulence on host wheat ears. The C-14 reductase ERG24 then reduces the C14=C15 double bond which leads to 4,4-dimethylfecosterol. A sequence of further demethylations at C-4, involving the C-4 demethylation complex containing the C-4 methylsterol oxidases ERG25, the sterol-4-alpha-carboxylate 3-dehydrogenase ERG26 and the 3-keto-steroid reductase ERG27, leads to the production of fecosterol via 4-methylfecosterol. ERG28 has a role as a scaffold to help anchor ERG25, ERG26 and ERG27 to the endoplasmic reticulum. The C-8 sterol isomerase ERG2 then catalyzes the reaction which results in unsaturation at C-7 in the B ring of sterols and thus converts fecosterol to episterol. The sterol-C5-desaturases ERG3A and ERG3BB then catalyze the introduction of a C-5 double bond in the B ring to produce 5-dehydroepisterol. The C-22 sterol desaturases ERG5A and ERG5B further convert 5-dehydroepisterol into ergosta-5,7,22,24(28)-tetraen-3beta-ol by forming the C-22(23) double bond in the sterol side chain. Finally, ergosta-5,7,22,24(28)-tetraen-3beta-ol is substrate of the C-24(28) sterol reductase ERG4 to produce ergosterol. This Gibberella zeae (strain ATCC MYA-4620 / CBS 123657 / FGSC 9075 / NRRL 31084 / PH-1) (Wheat head blight fungus) protein is C-22 sterol desaturase ERG5A.